We begin with the raw amino-acid sequence, 181 residues long: MSRIGRRPIALPAKVEIQIDGQHIAVKGPKGQLSRSLPPLITVQQNAQMLTVSRLNDSRPARQLHGLCRTLVANMVDGVSKGFERRLELVGVGYRAAIQGSKLVLNVGYSHPVEIPFPPGIQIAVEGNNIIVVSGTDKELVGNTAARIRAVRPPEPYKGKGIRYLGEQVRRKAGKSGKAKK.

It belongs to the universal ribosomal protein uL6 family. As to quaternary structure, part of the 50S ribosomal subunit.

This protein binds to the 23S rRNA, and is important in its secondary structure. It is located near the subunit interface in the base of the L7/L12 stalk, and near the tRNA binding site of the peptidyltransferase center. The polypeptide is Large ribosomal subunit protein uL6 (Synechococcus sp. (strain JA-2-3B'a(2-13)) (Cyanobacteria bacterium Yellowstone B-Prime)).